Here is a 400-residue protein sequence, read N- to C-terminus: Cysteine desulfurase (400 aa).

Pyridoxal 5'-phosphate contacts are provided by residues G72–T73, N152, Q180, and S200–H202. K203 is modified (N6-(pyridoxal phosphate)lysine). Residue T238 coordinates pyridoxal 5'-phosphate. The active-site Cysteine persulfide intermediate is C326. [2Fe-2S] cluster is bound at residue C326.

This sequence belongs to the class-V pyridoxal-phosphate-dependent aminotransferase family. NifS/IscS subfamily. Homodimer. Pyridoxal 5'-phosphate is required as a cofactor.

It carries out the reaction (sulfur carrier)-H + L-cysteine = (sulfur carrier)-SH + L-alanine. In terms of biological role, catalyzes the removal of elemental sulfur atoms from cysteine to produce alanine. Seems to participate in the biosynthesis of the nitrogenase metalloclusters by providing the inorganic sulfur required for the Fe-S core formation. The protein is Cysteine desulfurase of Gluconacetobacter diazotrophicus (strain ATCC 49037 / DSM 5601 / CCUG 37298 / CIP 103539 / LMG 7603 / PAl5).